Here is a 209-residue protein sequence, read N- to C-terminus: Thymidylate kinase (209 aa).

10–17 (GIDGCGKT) lines the ATP pocket.

This sequence belongs to the thymidylate kinase family.

The catalysed reaction is dTMP + ATP = dTDP + ADP. In terms of biological role, phosphorylation of dTMP to form dTDP in both de novo and salvage pathways of dTTP synthesis. The chain is Thymidylate kinase from Synechococcus sp. (strain CC9605).